We begin with the raw amino-acid sequence, 242 residues long: Small ribosomal subunit protein uS2 (242 aa).

It belongs to the universal ribosomal protein uS2 family.

The polypeptide is Small ribosomal subunit protein uS2 (Shewanella baltica (strain OS223)).